Here is a 516-residue protein sequence, read N- to C-terminus: Probable inorganic phosphate transporter 1-6 (516 aa).

A2 is modified (N-acetylalanine). The Cytoplasmic segment spans residues 2–25; sequence ANEEQGSILKALDVAKTQWYHVTA. The chain crosses the membrane as a helical span at residues 26-46; it reads VVVSGMGFFTDSYDLFVISLI. At 47 to 71 the chain is on the extracellular side; sequence TKLLGRIYYQVPGSSSPGSLPDGIS. A helical membrane pass occupies residues 72-92; the sequence is AAVSGVAFAGTFIGQIFFGCL. Residues 93–100 are Cytoplasmic-facing; sequence GDKLGRKR. Residues 101–121 form a helical membrane-spanning segment; the sequence is VYGLTLLIMTICSICSGLSLG. At 122-132 the chain is on the extracellular side; that stretch reads RDPKTVMVTLC. Residues 133-153 traverse the membrane as a helical segment; sequence FFRFWLGFGIGGDYPLSATIM. At 154–162 the chain is on the cytoplasmic side; it reads SEYSNKRTR. A helical transmembrane segment spans residues 163 to 183; the sequence is GAFIAAVFGMQGIGILAAGAV. At 184-212 the chain is on the extracellular side; the sequence is SLLVSAVFESKFPSRAYILDGAASTVPQA. A helical membrane pass occupies residues 213–233; that stretch reads DYVWRIILMVGALPALLTYYW. Residues 234–293 lie on the Cytoplasmic side of the membrane; that stretch reads RMKMPETARYTALVSKNAEQAALDMTKVLNVDIEASAAKNDQARVSSDEFGLFSMKFLRR. The chain crosses the membrane as a helical span at residues 294 to 314; the sequence is HGLHLLGTASTWFLLDIAFYS. Over 315 to 349 the chain is Extracellular; the sequence is QNLFQKDIFTTIGWLPSAKTMNAIQELYMIAKAQT. The chain crosses the membrane as a helical span at residues 350–370; it reads IIACCSTVPGYFFTVGFIDYM. Residues 371 to 374 lie on the Cytoplasmic side of the membrane; sequence GRKK. A helical transmembrane segment spans residues 375–395; it reads IQIMGFAMMTIFMLSLAIPYH. Topologically, residues 396–403 are extracellular; sequence HWTLPANR. The helical transmembrane segment at 404 to 424 threads the bilayer; sequence IGFVVLYSFTFFFSNFGPNAT. The Cytoplasmic segment spans residues 425–442; sequence TFIVPAEIFPARIRSTCH. Residues 443-463 form a helical membrane-spanning segment; that stretch reads GISAASGKAGAMVGSFGFSAL. At 464 to 471 the chain is on the extracellular side; sequence VKALGMSN. The helical transmembrane segment at 472-492 threads the bilayer; the sequence is TLYIMAGINLLGLLLTFTIPE. Over 493–516 the chain is Cytoplasmic; sequence TNGKSLEELSGETEPEKIKEKIVV.

It belongs to the major facilitator superfamily. Phosphate:H(+) symporter (TC 2.A.1.9) family. As to expression, expressed in anthers, tapetumand mature pollen and, to a lower extent, in hydathodes and vascular tissues of cotyledons of flowering plants.

It is found in the membrane. High-affinity transporter for external inorganic phosphate. This Arabidopsis thaliana (Mouse-ear cress) protein is Probable inorganic phosphate transporter 1-6 (PHT1-6).